Here is a 136-residue protein sequence, read N- to C-terminus: Large ribosomal subunit protein uL16c (136 aa).

Belongs to the universal ribosomal protein uL16 family. As to quaternary structure, part of the 50S ribosomal subunit.

Its subcellular location is the plastid. It localises to the chloroplast. The sequence is that of Large ribosomal subunit protein uL16c from Guizotia abyssinica (Niger).